A 105-amino-acid chain; its full sequence is Guanyl-specific ribonuclease Ms (105 aa).

Disulfide bonds link cysteine 3-cysteine 11 and cysteine 7-cysteine 102. The active site involves histidine 39. The active-site Proton acceptor is the glutamate 57. Histidine 91 functions as the Proton donor in the catalytic mechanism.

Belongs to the ribonuclease N1/T1 family.

It catalyses the reaction [RNA] containing guanosine + H2O = an [RNA fragment]-3'-guanosine-3'-phosphate + a 5'-hydroxy-ribonucleotide-3'-[RNA fragment].. The polypeptide is Guanyl-specific ribonuclease Ms (Aspergillus phoenicis (Aspergillus saitoi)).